Reading from the N-terminus, the 429-residue chain is Serine hydroxymethyltransferase (429 aa).

Residues leucine 128 and 132–134 (GHL) each bind (6S)-5,6,7,8-tetrahydrofolate. Position 237 is an N6-(pyridoxal phosphate)lysine (lysine 237).

It belongs to the SHMT family. As to quaternary structure, homodimer. Pyridoxal 5'-phosphate serves as cofactor.

It is found in the cytoplasm. The catalysed reaction is (6R)-5,10-methylene-5,6,7,8-tetrahydrofolate + glycine + H2O = (6S)-5,6,7,8-tetrahydrofolate + L-serine. It participates in one-carbon metabolism; tetrahydrofolate interconversion. Its pathway is amino-acid biosynthesis; glycine biosynthesis; glycine from L-serine: step 1/1. Its function is as follows. Catalyzes the reversible interconversion of serine and glycine with tetrahydrofolate (THF) serving as the one-carbon carrier. This reaction serves as the major source of one-carbon groups required for the biosynthesis of purines, thymidylate, methionine, and other important biomolecules. Also exhibits THF-independent aldolase activity toward beta-hydroxyamino acids, producing glycine and aldehydes, via a retro-aldol mechanism. The chain is Serine hydroxymethyltransferase from Caulobacter vibrioides (strain ATCC 19089 / CIP 103742 / CB 15) (Caulobacter crescentus).